Here is a 543-residue protein sequence, read N- to C-terminus: Bifunctional riboflavin biosynthesis protein RIBA 1, chloroplastic (543 aa).

The transit peptide at 1–56 directs the protein to the chloroplast; sequence MSSINLSSSSPSTISLSRSRLSQSSTTLLHGLHRVTLPSNHPLSTFSIKTNTGKVK. A DHBP synthase region spans residues 57–328; that stretch reads AAVISREDDL…IADLIRYRRK (272 aa). D-ribulose 5-phosphate is bound by residues 152-153, Asp157, 267-271, and Glu291; these read RE and RAGHT. Residue Glu153 coordinates Mg(2+). His270 provides a ligand contact to Mg(2+). Positions 329–543 are GTP cyclohydrolase II; the sequence is RDKLVERASA…VEKIESESES (215 aa). A GTP-binding site is contributed by 379–383; it reads RVHSE. Zn(2+) is bound by residues Cys384, Cys395, and Cys397. GTP contacts are provided by residues Gln400, 423–425, and Thr445; that span reads EGR. The active-site Proton acceptor; for GTP cyclohydrolase activity is Asp457. Arg459 acts as the Nucleophile; for GTP cyclohydrolase activity in catalysis. The GTP site is built by Thr480 and Lys485.

It in the N-terminal section; belongs to the DHBP synthase family. This sequence in the C-terminal section; belongs to the GTP cyclohydrolase II family. Requires Mg(2+) as cofactor. Mn(2+) is required as a cofactor. Zn(2+) serves as cofactor. Expressed in leaves, shoots, roots, flowers and siliques.

The protein resides in the plastid. Its subcellular location is the chloroplast. The catalysed reaction is D-ribulose 5-phosphate = (2S)-2-hydroxy-3-oxobutyl phosphate + formate + H(+). It catalyses the reaction GTP + 4 H2O = 2,5-diamino-6-hydroxy-4-(5-phosphoribosylamino)-pyrimidine + formate + 2 phosphate + 3 H(+). It functions in the pathway cofactor biosynthesis; riboflavin biosynthesis; 2-hydroxy-3-oxobutyl phosphate from D-ribulose 5-phosphate: step 1/1. The protein operates within cofactor biosynthesis; riboflavin biosynthesis; 5-amino-6-(D-ribitylamino)uracil from GTP: step 1/4. In terms of biological role, involved in riboflavin biosynthesis. Catalyzes both the conversion of D-ribulose 5-phosphate to formate and 3,4-dihydroxy-2-butanone 4-phosphate and the conversion of GTP to 2,5-diamino-6-ribosylamino-4(3H)-pyrimidinone 5'-phosphate (DARP), formate and pyrophosphate. RIBA2 and RIBA3 together are not able to complement the loss of function of RIBA1. The polypeptide is Bifunctional riboflavin biosynthesis protein RIBA 1, chloroplastic (RIBA1) (Arabidopsis thaliana (Mouse-ear cress)).